We begin with the raw amino-acid sequence, 105 residues long: Nucleoid-associated protein MXAN_1931 (105 aa).

It belongs to the YbaB/EbfC family. Homodimer.

The protein resides in the cytoplasm. Its subcellular location is the nucleoid. In terms of biological role, binds to DNA and alters its conformation. May be involved in regulation of gene expression, nucleoid organization and DNA protection. In Myxococcus xanthus (strain DK1622), this protein is Nucleoid-associated protein MXAN_1931.